We begin with the raw amino-acid sequence, 297 residues long: Protein-methionine-sulfoxide reductase catalytic subunit MsrP (297 aa).

Residues 1 to 35 (MLITPEKLYKQRRNFLKLGAGALISSSVLASKLSA) constitute a signal peptide (tat-type signal). Mo-molybdopterin contacts are provided by residues 62–63 (YE), C116, T151, N201, R206, and 217–219 (SIK).

Belongs to the MsrP family. As to quaternary structure, heterodimer of a catalytic subunit (MsrP) and a heme-binding subunit (MsrQ). The cofactor is Mo-molybdopterin. Predicted to be exported by the Tat system. The position of the signal peptide cleavage has not been experimentally proven.

It is found in the periplasm. The enzyme catalyses L-methionyl-[protein] + a quinone + H2O = L-methionyl-(S)-S-oxide-[protein] + a quinol. It catalyses the reaction L-methionyl-[protein] + a quinone + H2O = L-methionyl-(R)-S-oxide-[protein] + a quinol. In terms of biological role, part of the MsrPQ system that repairs oxidized periplasmic proteins containing methionine sulfoxide residues (Met-O), using respiratory chain electrons. Thus protects these proteins from oxidative-stress damage caused by reactive species of oxygen and chlorine generated by the host defense mechanisms. MsrPQ is essential for the maintenance of envelope integrity under bleach stress, rescuing a wide series of structurally unrelated periplasmic proteins from methionine oxidation. The catalytic subunit MsrP is non-stereospecific, being able to reduce both (R-) and (S-) diastereoisomers of methionine sulfoxide. The polypeptide is Protein-methionine-sulfoxide reductase catalytic subunit MsrP (Campylobacter jejuni subsp. jejuni serotype O:2 (strain ATCC 700819 / NCTC 11168)).